The following is a 468-amino-acid chain: UDP-N-acetylmuramate--L-alanine ligase (468 aa).

112 to 118 (GTHGKTT) provides a ligand contact to ATP.

This sequence belongs to the MurCDEF family.

It localises to the cytoplasm. It carries out the reaction UDP-N-acetyl-alpha-D-muramate + L-alanine + ATP = UDP-N-acetyl-alpha-D-muramoyl-L-alanine + ADP + phosphate + H(+). The protein operates within cell wall biogenesis; peptidoglycan biosynthesis. Functionally, cell wall formation. The chain is UDP-N-acetylmuramate--L-alanine ligase from Bordetella petrii (strain ATCC BAA-461 / DSM 12804 / CCUG 43448).